We begin with the raw amino-acid sequence, 304 residues long: Thyroxine 5-deiodinase (304 aa).

Residues 1–22 are disordered; the sequence is MPRQAASRLVVGEGEGPPGASG. The Cytoplasmic segment spans residues 1–44; it reads MPRQAASRLVVGEGEGPPGASGPAATMLRSLLLHSLRLCAQTAS. A helical; Signal-anchor for type II membrane protein membrane pass occupies residues 45 to 67; the sequence is CLVLFPRFLGTAFMLWLLDFLCI. Residues 68 to 304 are Extracellular-facing; sequence RKHFLRRRHP…QLHGTRPHRF (237 aa). Sec170 is a catalytic residue. Position 170 (Sec170) is a non-standard amino acid, selenocysteine.

The protein belongs to the iodothyronine deiodinase family. Monomer. Homodimer. May undergo minor heretodimerization with DIO1 and DIO2.

It is found in the cell membrane. It localises to the endosome membrane. The catalysed reaction is 3,3',5'-triiodo-L-thyronine + iodide + A + H(+) = L-thyroxine + AH2. It catalyses the reaction 3,3'-diiodo-L-thyronine + iodide + A + H(+) = 3,3',5-triiodo-L-thyronine + AH2. It carries out the reaction 3-iodo-L-thyronine + iodide + A + H(+) = 3,5-diiodo-L-thyronine + AH2. The enzyme catalyses L-thyronine + iodide + A + H(+) = 3-iodo-L-thyronine + AH2. The catalysed reaction is 3',5'-diiodo-L-thyronine + iodide + A + H(+) = 3,3',5'-triiodo-L-thyronine + AH2. It catalyses the reaction 3'-iodo-L-thyronine + iodide + A + H(+) = 3,3'-diiodo-L-thyronine + AH2. It carries out the reaction 3,3',5'-triiodothyronamine + iodide + A + H(+) = 3,3',5,5'-tetraiodothyronamine + AH2. The enzyme catalyses 3',5'-diiodothyronamine + iodide + A + H(+) = 3,3',5'-triiodothyronamine + AH2. The catalysed reaction is 3,3'-diiodothyronamine + iodide + A + H(+) = 3,3',5-triiodothyronamine + AH2. It catalyses the reaction 3-iodothyronamine + iodide + A + H(+) = 3,5-diiodothyronamine + AH2. It carries out the reaction 3'-iodothyronamine + iodide + A + H(+) = 3,3'-diiodothyronamine + AH2. The enzyme catalyses thyronamine + iodide + A + H(+) = 3-iodothyronamine + AH2. Plays a crucial role in the metabolism of thyroid hormones (TH) and has specific roles in TH activation and inactivation by deiodination. Catalyzes the deiodination of L-thyroxine (T4) to 3,3',5'-triiodothyronine (rT3), 3,5,3'-triiodothyronine (T3) to 3,3'-diiodothyronine (3,3'-T2), 3,5-diiodothyronine (3,5-T2) to 3-monoiodothyronine (3-T1), rT3 to 3',5'-diiodothyronine (3',5'-T2) and 3,3'-T2 to 3'-monoiodothyronine (3'-T1) via inner-ring deiodination (IRD). Catalyzes the deiodination of 3-T1 to L-thyronine (T0) via outer-ring deiodination (ORD). Catalyzes the tyrosyl ring deiodinations of 3,3',5,5'-tetraiodothyronamine, 3,3',5'-triiodothyronamine, 3,5,3'-triiodothyronamine, 3,5-diiodothyronamine, 3,3'-diiodothyronamine and 3-iodothyronamine. The polypeptide is Thyroxine 5-deiodinase (Dio3) (Mus musculus (Mouse)).